Consider the following 880-residue polypeptide: Translation initiation factor IF-2 (880 aa).

Basic and acidic residues-rich tracts occupy residues 34–43 (HMSSLDDKQV), 59–69 (TEKDSKNSSRK), 82–94 (RRRDNKNEHDNRH), 110–131 (NRRENEDKKTTSAKPAARDLLN), 167–181 (KKVENTRKPKEEKLE), 230–240 (QKEETKPTRKK), and 248–261 (EVPDYERERSEHSD). The interval 34 to 297 (HMSSLDDKQV…KERPLPETLV (264 aa)) is disordered. Over residues 262–275 (KARRRRNKKNKRIN) the composition is skewed to basic residues. The span at 276–292 (QSKEVKKQPTQRKERPL) shows a compositional bias: basic and acidic residues. Residues 381–550 (KRPPVVTIMG…LLQADVMELK (170 aa)) form the tr-type G domain. Positions 390–397 (GHVDHGKT) are G1. GTP is bound at residue 390–397 (GHVDHGKT). Residues 415 to 419 (GITQR) form a G2 region. The segment at 436 to 439 (DTPG) is G3. GTP contacts are provided by residues 436 to 440 (DTPGH) and 490 to 493 (NKID). The tract at residues 490–493 (NKID) is G4. The segment at 526 to 528 (SAK) is G5.

It belongs to the TRAFAC class translation factor GTPase superfamily. Classic translation factor GTPase family. IF-2 subfamily.

Its subcellular location is the cytoplasm. In terms of biological role, one of the essential components for the initiation of protein synthesis. Protects formylmethionyl-tRNA from spontaneous hydrolysis and promotes its binding to the 30S ribosomal subunits. Also involved in the hydrolysis of GTP during the formation of the 70S ribosomal complex. This Lactobacillus johnsonii (strain CNCM I-12250 / La1 / NCC 533) protein is Translation initiation factor IF-2.